The sequence spans 496 residues: Hexokinase-2 (496 aa).

The helical transmembrane segment at 4 to 24 threads the bilayer; it reads ATVGAVVVGTAAAVAVAALIM. A Hexokinase domain is found at 35–487; the sequence is ARARAILKEF…SGIGAALLAA (453 aa). A hexokinase small subdomain region spans residues 90–228; the sequence is TGDEGGVFYA…EIDMRVSALV (139 aa). ADP-binding residues include G104, T105, and N106. Positions 194, 195, 229, and 230 each coordinate D-glucose. The interval 229–476 is hexokinase large subdomain; sequence NDTVGTLAGG…TSIVFKHAND (248 aa). T253 is a binding site for ADP. The D-glucose site is built by N256, E284, and E315. G441 is an ADP binding site.

It belongs to the hexokinase family.

It is found in the plastid. The protein localises to the chloroplast outer membrane. It carries out the reaction a D-hexose + ATP = a D-hexose 6-phosphate + ADP + H(+). The enzyme catalyses D-fructose + ATP = D-fructose 6-phosphate + ADP + H(+). It catalyses the reaction D-glucose + ATP = D-glucose 6-phosphate + ADP + H(+). It participates in carbohydrate metabolism; hexose metabolism. It functions in the pathway carbohydrate degradation; glycolysis; D-glyceraldehyde 3-phosphate and glycerone phosphate from D-glucose: step 1/4. Functionally, fructose and glucose phosphorylating enzyme. May be involved in the phosphorylation of glucose during the export from plastids to cytosol. Seems neither to be involved in cell sugar sensing nor in carbohydrate metabolism in tuber. This Solanum tuberosum (Potato) protein is Hexokinase-2 (HXK2).